The sequence spans 125 residues: Small ribosomal subunit protein uS12m (125 aa).

Disordered stretches follow at residues 1–50 (MPTL…SAPR) and 106–125 (GIPN…PKSI). Basic and acidic residues predominate over residues 10-23 (HGREEKRRTDRTRA).

This sequence belongs to the universal ribosomal protein uS12 family.

The protein resides in the mitochondrion. Protein S12 is involved in the translation initiation step. This is Small ribosomal subunit protein uS12m (RPS12) from Magnolia soulangeana (Saucer magnolia).